The sequence spans 144 residues: D-aminoacyl-tRNA deacylase (144 aa).

Positions 136–137 (GP) match the Gly-cisPro motif, important for rejection of L-amino acids motif.

It belongs to the DTD family. Homodimer.

It localises to the cytoplasm. It catalyses the reaction glycyl-tRNA(Ala) + H2O = tRNA(Ala) + glycine + H(+). The catalysed reaction is a D-aminoacyl-tRNA + H2O = a tRNA + a D-alpha-amino acid + H(+). An aminoacyl-tRNA editing enzyme that deacylates mischarged D-aminoacyl-tRNAs. Also deacylates mischarged glycyl-tRNA(Ala), protecting cells against glycine mischarging by AlaRS. Acts via tRNA-based rather than protein-based catalysis; rejects L-amino acids rather than detecting D-amino acids in the active site. By recycling D-aminoacyl-tRNA to D-amino acids and free tRNA molecules, this enzyme counteracts the toxicity associated with the formation of D-aminoacyl-tRNA entities in vivo and helps enforce protein L-homochirality. The protein is D-aminoacyl-tRNA deacylase of Vibrio cholerae serotype O1 (strain ATCC 39541 / Classical Ogawa 395 / O395).